The following is a 117-amino-acid chain: Ribonuclease P protein component 4 (117 aa).

The Zn(2+) site is built by C64, C67, C93, and C96.

It belongs to the eukaryotic/archaeal RNase P protein component 4 family. As to quaternary structure, consists of a catalytic RNA component and at least 4-5 protein subunits. Zn(2+) serves as cofactor.

The protein resides in the cytoplasm. The enzyme catalyses Endonucleolytic cleavage of RNA, removing 5'-extranucleotides from tRNA precursor.. Part of ribonuclease P, a protein complex that generates mature tRNA molecules by cleaving their 5'-ends. This is Ribonuclease P protein component 4 from Pyrococcus abyssi (strain GE5 / Orsay).